The sequence spans 316 residues: Short-chain dehydrogenase/reductase family 16C member 6 (316 aa).

Position 40 to 64 (40 to 64 (LITGAASGLGRLLAIKFASLGAILV)) interacts with NAD(+). Ser173 is a substrate binding site. The Proton acceptor role is filled by Tyr186.

It belongs to the short-chain dehydrogenases/reductases (SDR) family.

The polypeptide is Short-chain dehydrogenase/reductase family 16C member 6 (SDR16C6) (Bos taurus (Bovine)).